Here is a 180-residue protein sequence, read N- to C-terminus: Inner membrane-spanning protein YciB (180 aa).

A run of 6 helical transmembrane segments spans residues Leu-4 to Ile-24, Gln-25 to Ile-45, Val-49 to Ile-69, Ile-76 to Ile-96, Ile-118 to Val-138, and Phe-150 to Leu-170.

This sequence belongs to the YciB family.

It is found in the cell inner membrane. Plays a role in cell envelope biogenesis, maintenance of cell envelope integrity and membrane homeostasis. This is Inner membrane-spanning protein YciB from Rickettsia typhi (strain ATCC VR-144 / Wilmington).